A 201-amino-acid polypeptide reads, in one-letter code: Ribosome maturation factor RimP (201 aa).

Belongs to the RimP family.

It is found in the cytoplasm. Its function is as follows. Required for maturation of 30S ribosomal subunits. The polypeptide is Ribosome maturation factor RimP (Acidiphilium cryptum (strain JF-5)).